We begin with the raw amino-acid sequence, 343 residues long: Glyceraldehyde-3-phosphate dehydrogenase 1 (343 aa).

NAD(+)-binding positions include 13 to 14 (RI), aspartate 35, arginine 79, and serine 121. D-glyceraldehyde 3-phosphate is bound by residues 154 to 156 (SCT), threonine 185, 214 to 215 (TG), and arginine 237. Catalysis depends on cysteine 155, which acts as the Nucleophile. Position 319 (asparagine 319) interacts with NAD(+).

This sequence belongs to the glyceraldehyde-3-phosphate dehydrogenase family. Homotetramer.

It localises to the cytoplasm. It carries out the reaction D-glyceraldehyde 3-phosphate + phosphate + NAD(+) = (2R)-3-phospho-glyceroyl phosphate + NADH + H(+). The protein operates within carbohydrate degradation; glycolysis; pyruvate from D-glyceraldehyde 3-phosphate: step 1/5. In terms of biological role, catalyzes the oxidative phosphorylation of glyceraldehyde 3-phosphate (G3P) to 1,3-bisphosphoglycerate (BPG) using the cofactor NAD. The first reaction step involves the formation of a hemiacetal intermediate between G3P and a cysteine residue, and this hemiacetal intermediate is then oxidized to a thioester, with concomitant reduction of NAD to NADH. The reduced NADH is then exchanged with the second NAD, and the thioester is attacked by a nucleophilic inorganic phosphate to produce BPG. In Nostoc sp. (strain PCC 7120 / SAG 25.82 / UTEX 2576), this protein is Glyceraldehyde-3-phosphate dehydrogenase 1 (gap1).